The primary structure comprises 280 residues: DegV domain-containing protein M6_Spy1440 (280 aa).

The 278-residue stretch at 3–280 folds into the DegV domain; that stretch reads WKIVTDSGCD…DGGLLMGYEI (278 aa). Residues Ser63 and Ser91 each contribute to the hexadecanoate site.

Functionally, may bind long-chain fatty acids, such as palmitate, and may play a role in lipid transport or fatty acid metabolism. The chain is DegV domain-containing protein M6_Spy1440 from Streptococcus pyogenes serotype M6 (strain ATCC BAA-946 / MGAS10394).